Consider the following 226-residue polypeptide: MILIEHILGNVKKDPVWQAKLKNATVDLLVLDQREAQKSRCRKSTLQGLDLGISLDRHVVLADGDVLTWDEESNVAVVVQIHLRDVMVIDLSELKNRSADELIKTCFELGHALGNQHWKAVTKNNEVYVPLTVATTMMDSVMRTHGFQHLPFRFVKGAEILPLLTNSEARLLFGGAEDTDTHVHVASPLDEPHGSGLHIHSIHSHGDGHSHDHDHSHGDHDSDHKH.

The segment at 192–226 (PHGSGLHIHSIHSHGDGHSHDHDHSHGDHDSDHKH) is disordered. Basic and acidic residues predominate over residues 204–226 (SHGDGHSHDHDHSHGDHDSDHKH).

The protein belongs to the UreE family.

It localises to the cytoplasm. Involved in urease metallocenter assembly. Binds nickel. Probably functions as a nickel donor during metallocenter assembly. The protein is Urease accessory protein UreE of Yersinia intermedia.